The following is an 865-amino-acid chain: Cadherin-related family member 1 (865 aa).

Positions 1 to 23 (MKHVRHFIPSLFLSLVHVCLVQA) are cleaved as a signal peptide. The Extracellular segment spans residues 24–705 (NYAPYFFDNG…TKDNPMKALG (682 aa)). 6 Cadherin domains span residues 38–137 (NGNM…SPEF), 138–249 (INTP…PPMF), 250–356 (IGTP…PPTF), 362–475 (PQNR…VPKF), 476–579 (SSDY…SPEF), and 571–690 (DVND…GPMA). The chain crosses the membrane as a helical span at residues 706-726 (VLAGVMGIMVLITIMISTAMF). Residues 727–865 (WRNKRSNKIM…RNASMGEPHI (139 aa)) lie on the Cytoplasmic side of the membrane. The interval 782–810 (ENSNNNVQAAPVPPAAPLPPPPPALAASG) is disordered. Positions 792 to 805 (PVPPAAPLPPPPPA) are enriched in pro residues.

It localises to the membrane. Its function is as follows. Potential calcium-dependent cell-adhesion protein. The sequence is that of Cadherin-related family member 1 (CDHR1) from Gallus gallus (Chicken).